Reading from the N-terminus, the 294-residue chain is tRNA pseudouridine synthase B (294 aa).

Asp-39 acts as the Nucleophile in catalysis.

Belongs to the pseudouridine synthase TruB family. Type 1 subfamily.

The catalysed reaction is uridine(55) in tRNA = pseudouridine(55) in tRNA. In terms of biological role, responsible for synthesis of pseudouridine from uracil-55 in the psi GC loop of transfer RNAs. This is tRNA pseudouridine synthase B from Streptococcus pyogenes serotype M2 (strain MGAS10270).